Consider the following 890-residue polypeptide: Pentatricopeptide repeat-containing protein At3g57430, chloroplastic (890 aa).

The transit peptide at 1–44 directs the protein to the chloroplast; sequence MSCPLAFTFSLPSIFPFPSQLLPFSRHKHPYLLRATPTSATEDV. PPR repeat units follow at residues 61 to 95, 96 to 130, 132 to 162, 163 to 197, 198 to 231, 235 to 265, 266 to 300, 301 to 335, 337 to 371, 372 to 398, 404 to 438, 439 to 473, 474 to 504, 516 to 550, 551 to 581, 582 to 616, 617 to 652, and 653 to 683; these read SPEW…GIKP, DNYA…GYGV, SVTV…ISER, NQVS…NVEP, SSFT…GLRK, NSFI…FGGR, DLVT…GVEP, DEFT…GSLD, NSFV…KIGL, WNAM…MEES, NSTT…GLDR, DRFV…DLVT, WNTM…ERKV, NSIT…NLAT, DVAV…IPQK, NVIT…GVKP, NEVT…GVEP, and SSDH…MPRD. The type E motif stretch occupies residues 689–764; sequence AWSSLLGASR…EPGCSWIEHG (76 aa). Residues 765–795 are type E(+) motif; it reads DEVHKFVAGDSSHPQSEKLSGYLETLWERMR. The segment at 796-890 is type DYW motif; it reads KEGYVPDTSC…NGTCSCGDYW (95 aa).

It belongs to the PPR family. PCMP-H subfamily.

It localises to the plastid. The protein localises to the chloroplast. Involved in RNA editing events in chloroplasts. Required for the editing of a single site in ndhB and ndhF transcripts, which are two plastid-encoded subunits of the chloroplast NAD(P)H dehydrogenase (NDH) complex. Required for the editing of a single site in psbZ. Required for optimal activity of the NDH complex of the photosynthetic electron transport chain. In Arabidopsis thaliana (Mouse-ear cress), this protein is Pentatricopeptide repeat-containing protein At3g57430, chloroplastic (PCMP-H81).